The following is a 147-amino-acid chain: Sec-independent protein translocase protein TatB (147 aa).

The helical transmembrane segment at 2–22 (FSSIGWPEIFTVLILGLIIIG) threads the bilayer. The tract at residues 96–147 (FDPKKIMASGTEGEAYRERGINPQPAGDSASPQTPSNKESQPKAGFSWDDIT) is disordered. Residues 125-134 (ASPQTPSNKE) show a composition bias toward polar residues.

The protein belongs to the TatB family. As to quaternary structure, the Tat system comprises two distinct complexes: a TatABC complex, containing multiple copies of TatA, TatB and TatC subunits, and a separate TatA complex, containing only TatA subunits. Substrates initially bind to the TatABC complex, which probably triggers association of the separate TatA complex to form the active translocon.

The protein localises to the cell membrane. In terms of biological role, part of the twin-arginine translocation (Tat) system that transports large folded proteins containing a characteristic twin-arginine motif in their signal peptide across membranes. Together with TatC, TatB is part of a receptor directly interacting with Tat signal peptides. TatB may form an oligomeric binding site that transiently accommodates folded Tat precursor proteins before their translocation. This chain is Sec-independent protein translocase protein TatB, found in Corynebacterium diphtheriae (strain ATCC 700971 / NCTC 13129 / Biotype gravis).